We begin with the raw amino-acid sequence, 598 residues long: NADH-quinone oxidoreductase subunit C/D (598 aa).

An NADH dehydrogenase I subunit C region spans residues 1–188 (MTDSTTHDAL…DPFVLTKQKE (188 aa)). Residues 212–598 (DFMFLNLGPN…IDFVMSDVDR (387 aa)) are NADH dehydrogenase I subunit D.

This sequence in the N-terminal section; belongs to the complex I 30 kDa subunit family. The protein in the C-terminal section; belongs to the complex I 49 kDa subunit family. NDH-1 is composed of 13 different subunits. Subunits NuoB, CD, E, F, and G constitute the peripheral sector of the complex.

The protein localises to the cell inner membrane. The enzyme catalyses a quinone + NADH + 5 H(+)(in) = a quinol + NAD(+) + 4 H(+)(out). NDH-1 shuttles electrons from NADH, via FMN and iron-sulfur (Fe-S) centers, to quinones in the respiratory chain. The immediate electron acceptor for the enzyme in this species is believed to be ubiquinone. Couples the redox reaction to proton translocation (for every two electrons transferred, four hydrogen ions are translocated across the cytoplasmic membrane), and thus conserves the redox energy in a proton gradient. The protein is NADH-quinone oxidoreductase subunit C/D of Serratia proteamaculans (strain 568).